Consider the following 75-residue polypeptide: U6-lycotoxin-Ls1d (75 aa).

An N-terminal signal peptide occupies residues 1-21 (MKLLLFTALVLVVISLIEVEA). Positions 22 to 25 (ENER) are excised as a propeptide.

This sequence belongs to the neurotoxin 19 (CSTX) family. 06 (U6-Lctx) subfamily. Contains 4 disulfide bonds. Expressed by the venom gland.

The protein localises to the secreted. This chain is U6-lycotoxin-Ls1d, found in Lycosa singoriensis (Wolf spider).